The primary structure comprises 1460 residues: Ankyrin repeat-containing protein kinase A (1460 aa).

Disordered regions lie at residues 1 to 32 (MSIK…NINI), 57 to 181 (IKQQ…HKSH), 216 to 259 (RENE…ASST), 272 to 311 (STSN…VEFD), 329 to 354 (SSPS…TSTS), 374 to 510 (FTPS…SSNP), and 551 to 608 (CPSA…SSIP). Composition is skewed to low complexity over residues 8–32 (SNIN…NINI), 61–86 (SNNN…PTSH), and 111–128 (SSGS…NNNN). The segment covering 129–140 (QIKTSNGMNKPN) has biased composition (polar residues). Basic and acidic residues predominate over residues 149–162 (KPRENSQNKIDDNK). Composition is skewed to low complexity over residues 220-259 (NNNN…ASST) and 272-300 (STSN…RSTS). Polar residues-rich tracts occupy residues 329–345 (SSPS…VHMP) and 384–404 (PTNS…TIQP). Residues 405-422 (SSLDSSSESVSDGLQSVS) show a composition bias toward low complexity. Positions 423-434 (GSPVTASPSPTI) are enriched in polar residues. Positions 435 to 461 (SNNTNATTTNNNNNTNTNNNNNNNNNQ) are enriched in low complexity. The segment covering 462–472 (HNHHHHQHSHS) has biased composition (basic residues). The interval 467-667 (HQHSHSQQHD…IFRGCGIPLD (201 aa)) is interaction with 14-3-3 protein. The segment covering 486-497 (PSSPTSPTLLPS) has biased composition (low complexity). The segment at 499 to 551 (THDFSSEYSSNPGGKCAICRKPLWSFPISDKSRRCRDCSLVVHRACVPLATEC) adopts a Phorbol-ester/DAG-type zinc-finger fold. A compositionally biased stretch (polar residues) spans 559–568 (SKLSVPNGNQ). A compositionally biased stretch (low complexity) spans 569-608 (SNSSSSSSSSSSSSSSSNSSSSNTKGHSRTPSSPSVSSIP). The GRAM domain occupies 653–724 (RDFHFIFRGC…SNIASIEKRS (72 aa)). ANK repeat units lie at residues 814–843 (SKEI…QVNS), 852–883 (KGYT…RVRE), 887–920 (DGNT…NINE), 924–955 (NGET…NVNI), and 959–988 (AGES…DPTI). Positions 1112–1375 (LEYTEKIGSG…ATEAMTALAV (264 aa)) constitute a Protein kinase domain. ATP is bound by residues 1118–1126 (IGSGASGKV) and Lys1139. Asp1231 (proton acceptor) is an active-site residue. A helical membrane pass occupies residues 1293-1313 (MGIVMWEIVYCVVYGCYMIPY). Positions 1425 to 1460 (PEEEQIYQEAMEKQRRNQEASANRNQKNKELLNNNN) form a coiled coil. A disordered region spans residues 1434–1460 (AMEKQRRNQEASANRNQKNKELLNNNN).

The protein belongs to the protein kinase superfamily. TKL Ser/Thr protein kinase family.

It is found in the cytoplasm. It localises to the cytoskeleton. The protein localises to the membrane. Its subcellular location is the nucleus. The catalysed reaction is L-seryl-[protein] + ATP = O-phospho-L-seryl-[protein] + ADP + H(+). The enzyme catalyses L-threonyl-[protein] + ATP = O-phospho-L-threonyl-[protein] + ADP + H(+). Functionally, involved in the development of the fruiting body. Overexpression phenocopies the spnA null phenotype. In Dictyostelium discoideum (Social amoeba), this protein is Ankyrin repeat-containing protein kinase A (arkA).